Reading from the N-terminus, the 189-residue chain is Large ribosomal subunit protein eL18 (189 aa).

It belongs to the eukaryotic ribosomal protein eL18 family.

Its subcellular location is the cytoplasm. This is Large ribosomal subunit protein eL18 (RpL18) from Drosophila pseudoobscura pseudoobscura (Fruit fly).